Here is a 341-residue protein sequence, read N- to C-terminus: S-adenosylmethionine:tRNA ribosyltransferase-isomerase (341 aa).

Belongs to the QueA family. Monomer.

It localises to the cytoplasm. It catalyses the reaction 7-aminomethyl-7-carbaguanosine(34) in tRNA + S-adenosyl-L-methionine = epoxyqueuosine(34) in tRNA + adenine + L-methionine + 2 H(+). It functions in the pathway tRNA modification; tRNA-queuosine biosynthesis. In terms of biological role, transfers and isomerizes the ribose moiety from AdoMet to the 7-aminomethyl group of 7-deazaguanine (preQ1-tRNA) to give epoxyqueuosine (oQ-tRNA). The polypeptide is S-adenosylmethionine:tRNA ribosyltransferase-isomerase (Thermoanaerobacter sp. (strain X514)).